The chain runs to 342 residues: MATH domain and coiled-coil domain-containing protein At3g44800 (342 aa).

Residues 3 to 129 enclose the MATH domain; sequence YEKFTWVIKN…NNEVKIVAEV (127 aa). Positions 253–327 form a coiled coil; it reads KVDWLERKLE…ALLEKEKGKV (75 aa).

In Arabidopsis thaliana (Mouse-ear cress), this protein is MATH domain and coiled-coil domain-containing protein At3g44800.